The primary structure comprises 72 residues: Heat shock factor-binding protein 1-like protein 1 (72 aa).

Positions 12–62 (DLLQNAAENLLLEVEEHFQALTTTLNLRMEEMGSRIEDLQRNVDDLMTQAG) form a coiled coil.

The protein belongs to the HSBP1 family.

This chain is Heat shock factor-binding protein 1-like protein 1 (Hsbp1l1), found in Mus musculus (Mouse).